The sequence spans 216 residues: Peptide methionine sulfoxide reductase MsrA (216 aa).

C57 is an active-site residue.

It belongs to the MsrA Met sulfoxide reductase family.

It catalyses the reaction L-methionyl-[protein] + [thioredoxin]-disulfide + H2O = L-methionyl-(S)-S-oxide-[protein] + [thioredoxin]-dithiol. The enzyme catalyses [thioredoxin]-disulfide + L-methionine + H2O = L-methionine (S)-S-oxide + [thioredoxin]-dithiol. Has an important function as a repair enzyme for proteins that have been inactivated by oxidation. Catalyzes the reversible oxidation-reduction of methionine sulfoxide in proteins to methionine. The protein is Peptide methionine sulfoxide reductase MsrA of Agrobacterium fabrum (strain C58 / ATCC 33970) (Agrobacterium tumefaciens (strain C58)).